Reading from the N-terminus, the 212-residue chain is uncharacterized protein (212 aa).

The protein belongs to the IIV-6 309L family.

This is an uncharacterized protein from Aedes vexans (Inland floodwater mosquito).